The following is a 293-amino-acid chain: Amine sulfotransferase (293 aa).

A 3'-phosphoadenylyl sulfate-binding site is contributed by 46-51 (KSGTIW). Residue His-101 is the Proton acceptor of the active site. Residues Arg-123, Ser-131, 220–225 (ATFQKM), and 252–254 (RKG) contribute to the 3'-phosphoadenylyl sulfate site.

Belongs to the sulfotransferase 1 family.

It is found in the cytoplasm. The enzyme catalyses a primary amine + 3'-phosphoadenylyl sulfate = a sulfamate + adenosine 3',5'-bisphosphate + 2 H(+). Sulfotransferase that utilizes 3'-phospho-5'-adenylyl sulfate (PAPS) as sulfonate donor to catalyze the N-sulfonation of amines. This chain is Amine sulfotransferase (Sult3a1), found in Mus musculus (Mouse).